A 370-amino-acid polypeptide reads, in one-letter code: Dual-specificity RNA methyltransferase RlmN (370 aa).

E93 functions as the Proton acceptor in the catalytic mechanism. Residues 99–331 (DRKRGTLCVS…TRVRRTRGDD (233 aa)) enclose the Radical SAM core domain. C106 and C336 are disulfide-bonded. The [4Fe-4S] cluster site is built by C113, C117, and C120. S-adenosyl-L-methionine-binding positions include 162 to 163 (GE), S194, 216 to 218 (SLH), and N293. C336 serves as the catalytic S-methylcysteine intermediate.

It belongs to the radical SAM superfamily. RlmN family. [4Fe-4S] cluster is required as a cofactor.

It localises to the cytoplasm. It catalyses the reaction adenosine(2503) in 23S rRNA + 2 reduced [2Fe-2S]-[ferredoxin] + 2 S-adenosyl-L-methionine = 2-methyladenosine(2503) in 23S rRNA + 5'-deoxyadenosine + L-methionine + 2 oxidized [2Fe-2S]-[ferredoxin] + S-adenosyl-L-homocysteine. The catalysed reaction is adenosine(37) in tRNA + 2 reduced [2Fe-2S]-[ferredoxin] + 2 S-adenosyl-L-methionine = 2-methyladenosine(37) in tRNA + 5'-deoxyadenosine + L-methionine + 2 oxidized [2Fe-2S]-[ferredoxin] + S-adenosyl-L-homocysteine. Functionally, specifically methylates position 2 of adenine 2503 in 23S rRNA and position 2 of adenine 37 in tRNAs. m2A2503 modification seems to play a crucial role in the proofreading step occurring at the peptidyl transferase center and thus would serve to optimize ribosomal fidelity. The polypeptide is Dual-specificity RNA methyltransferase RlmN (Coxiella burnetii (strain CbuK_Q154) (Coxiella burnetii (strain Q154))).